The primary structure comprises 126 residues: Small ribosomal subunit protein uS8 (126 aa).

This sequence belongs to the universal ribosomal protein uS8 family. As to quaternary structure, part of the 30S ribosomal subunit. Contacts proteins S5 and S12.

Functionally, one of the primary rRNA binding proteins, it binds directly to 16S rRNA central domain where it helps coordinate assembly of the platform of the 30S subunit. In Desulfovibrio desulfuricans (strain ATCC 27774 / DSM 6949 / MB), this protein is Small ribosomal subunit protein uS8.